The following is a 440-amino-acid chain: Probable exopolygalacturonase C (440 aa).

Residues 1–21 form the signal peptide; it reads MLITNPALLGILASLVPLALG. Asn84 and Asn151 each carry an N-linked (GlcNAc...) asparagine glycan. 3 PbH1 repeats span residues 188–210, 217–238, and 240–261; these read GDDI…PFNT, GTNI…AVNT, and SHNI…SIGS. Asn219 is a glycosylation site (N-linked (GlcNAc...) asparagine). Residue Asp231 is the Proton donor of the active site. The active site involves His255. Residue Asn271 is glycosylated (N-linked (GlcNAc...) asparagine). A PbH1 4 repeat occupies 272-293; the sequence is ITNLRFEDVTVIDALYAARFKS. Asn313 carries N-linked (GlcNAc...) asparagine glycosylation. Cys389 and Cys395 are oxidised to a cystine. Asn434 carries an N-linked (GlcNAc...) asparagine glycan.

It belongs to the glycosyl hydrolase 28 family.

Its subcellular location is the secreted. The catalysed reaction is [(1-&gt;4)-alpha-D-galacturonosyl](n) + H2O = alpha-D-galacturonate + [(1-&gt;4)-alpha-D-galacturonosyl](n-1). Specific in hydrolyzing the terminal glycosidic bond of polygalacturonic acid and oligogalacturonates. The polypeptide is Probable exopolygalacturonase C (pgxC) (Aspergillus fumigatus (strain ATCC MYA-4609 / CBS 101355 / FGSC A1100 / Af293) (Neosartorya fumigata)).